The following is a 329-amino-acid chain: Beta-ketoacyl-[acyl-carrier-protein] synthase III (329 aa).

Catalysis depends on residues Cys-113 and His-255. Residues 256-260 (QANQR) are ACP-binding. Asn-285 is an active-site residue.

This sequence belongs to the thiolase-like superfamily. FabH family. Homodimer.

The protein resides in the cytoplasm. It catalyses the reaction malonyl-[ACP] + acetyl-CoA + H(+) = 3-oxobutanoyl-[ACP] + CO2 + CoA. It functions in the pathway lipid metabolism; fatty acid biosynthesis. Catalyzes the condensation reaction of fatty acid synthesis by the addition to an acyl acceptor of two carbons from malonyl-ACP. Catalyzes the first condensation reaction which initiates fatty acid synthesis and may therefore play a role in governing the total rate of fatty acid production. Possesses both acetoacetyl-ACP synthase and acetyl transacylase activities. Its substrate specificity determines the biosynthesis of branched-chain and/or straight-chain of fatty acids. This Chlorobium luteolum (strain DSM 273 / BCRC 81028 / 2530) (Pelodictyon luteolum) protein is Beta-ketoacyl-[acyl-carrier-protein] synthase III.